Consider the following 52-residue polypeptide: U-scutigerotoxin(01)-Tl1a (52 aa).

Residues 1 to 25 form the signal peptide; that stretch reads MLAKAMSLLMMFLLVLVIGSVMVSA.

Belongs to the scutigerotoxin-01 family. Contains 1 disulfide bond. As to expression, expressed by the venom gland.

It is found in the secreted. The sequence is that of U-scutigerotoxin(01)-Tl1a from Thereuopoda longicornis (Long-legged centipede).